Consider the following 329-residue polypeptide: Red chlorophyll catabolite reductase 1, chloroplastic (329 aa).

Residues 1–11 (MLQLRSPPPAT) are compositionally biased toward pro residues. The N-terminal 50 residues, 1–50 (MLQLRSPPPATSSPSSAVSFPTLAPRLLPLRRRRRGAGSQLGGKTSSAVR), are a transit peptide targeting the chloroplast. Residues 1–61 (MLQLRSPPPA…SSAAAPGATE (61 aa)) are disordered. Low complexity-rich tracts occupy residues 12-28 (SSPS…PRLL) and 46-59 (SSAV…APGA). Residues Glu-163, 216–218 (YRS), and Asp-299 contribute to the red chlorophyll catabolite site.

Expressed in leaves. Expressed at low levels in roots, stems, panicles and seeds.

It is found in the plastid. The protein resides in the chloroplast. It carries out the reaction primary fluorescent chlorophyll catabolite + 2 oxidized [2Fe-2S]-[ferredoxin] = red chlorophyll catabolite + 2 reduced [2Fe-2S]-[ferredoxin] + 3 H(+). Its pathway is porphyrin-containing compound metabolism; chlorophyll degradation. Functionally, catalyzes the key reaction of chlorophyll catabolism, porphyrin macrocycle cleavage of pheophorbide a (pheide a) to a primary fluorescent catabolite (pFCC). Works in a two-step reaction with pheophorbide a oxygenase (PaO) by reducing the C20/C1 double bond of the intermediate, RCC. Belongs to the chlorophyll catabolic enzymes (CCEs). May play a role in senescence and response to wounding. The polypeptide is Red chlorophyll catabolite reductase 1, chloroplastic (Oryza sativa subsp. japonica (Rice)).